We begin with the raw amino-acid sequence, 224 residues long: Adenylate kinase (224 aa).

10–15 (GSGKST) contacts ATP. Positions 30-59 (SSGDMIRAEIEKGSELGKELKKYLAKGELI) are NMP. AMP is bound by residues S31, R36, 57 to 59 (ELI), 83 to 86 (GYPR), and Q90. Residues 124–161 (GRRICPKCGAVYHLRYRPPKVPGKCDLCGSQLIQREDD) form an LID region. R125 lines the ATP pocket. The Zn(2+) site is built by C128 and C131. Position 134-135 (134-135 (VY)) interacts with ATP. Residues C148 and C151 each coordinate Zn(2+). Residues R158 and R169 each contribute to the AMP site. Residue G197 coordinates ATP.

Belongs to the adenylate kinase family. In terms of assembly, monomer.

It is found in the cytoplasm. The catalysed reaction is AMP + ATP = 2 ADP. The protein operates within purine metabolism; AMP biosynthesis via salvage pathway; AMP from ADP: step 1/1. Catalyzes the reversible transfer of the terminal phosphate group between ATP and AMP. Plays an important role in cellular energy homeostasis and in adenine nucleotide metabolism. In Thermococcus onnurineus (strain NA1), this protein is Adenylate kinase.